The sequence spans 78 residues: DNA-directed RNA polymerase subunit omega (78 aa).

Belongs to the RNA polymerase subunit omega family. As to quaternary structure, in cyanobacteria the RNAP catalytic core is composed of 2 alpha, 1 beta, 1 beta', 1 gamma and 1 omega subunit. When a sigma factor is associated with the core the holoenzyme is formed, which can initiate transcription.

It carries out the reaction RNA(n) + a ribonucleoside 5'-triphosphate = RNA(n+1) + diphosphate. In terms of biological role, promotes RNA polymerase assembly. Latches the N- and C-terminal regions of the beta' subunit thereby facilitating its interaction with the beta and alpha subunits. The chain is DNA-directed RNA polymerase subunit omega from Prochlorococcus marinus (strain MIT 9515).